We begin with the raw amino-acid sequence, 241 residues long: Small ribosomal subunit protein uS2 (241 aa).

Belongs to the universal ribosomal protein uS2 family.

In Klebsiella pneumoniae (strain 342), this protein is Small ribosomal subunit protein uS2.